A 328-amino-acid polypeptide reads, in one-letter code: Aspartate carbamoyltransferase catalytic subunit (328 aa).

Carbamoyl phosphate contacts are provided by arginine 70 and threonine 71. Lysine 98 is an L-aspartate binding site. The carbamoyl phosphate site is built by arginine 120, histidine 150, and glutamine 153. The L-aspartate site is built by arginine 183 and arginine 238. Glycine 279 and proline 280 together coordinate carbamoyl phosphate.

It belongs to the aspartate/ornithine carbamoyltransferase superfamily. ATCase family. As to quaternary structure, heterododecamer (2C3:3R2) of six catalytic PyrB chains organized as two trimers (C3), and six regulatory PyrI chains organized as three dimers (R2).

The enzyme catalyses carbamoyl phosphate + L-aspartate = N-carbamoyl-L-aspartate + phosphate + H(+). Its pathway is pyrimidine metabolism; UMP biosynthesis via de novo pathway; (S)-dihydroorotate from bicarbonate: step 2/3. In terms of biological role, catalyzes the condensation of carbamoyl phosphate and aspartate to form carbamoyl aspartate and inorganic phosphate, the committed step in the de novo pyrimidine nucleotide biosynthesis pathway. This chain is Aspartate carbamoyltransferase catalytic subunit, found in Methylococcus capsulatus (strain ATCC 33009 / NCIMB 11132 / Bath).